We begin with the raw amino-acid sequence, 343 residues long: Heat-inducible transcription repressor HrcA (343 aa).

The protein belongs to the HrcA family.

In terms of biological role, negative regulator of class I heat shock genes (grpE-dnaK-dnaJ and groELS operons). Prevents heat-shock induction of these operons. This chain is Heat-inducible transcription repressor HrcA, found in Thermoanaerobacter sp. (strain X514).